The primary structure comprises 91 residues: Probable Fe(2+)-trafficking protein (91 aa).

Belongs to the Fe(2+)-trafficking protein family.

Functionally, could be a mediator in iron transactions between iron acquisition and iron-requiring processes, such as synthesis and/or repair of Fe-S clusters in biosynthetic enzymes. This chain is Probable Fe(2+)-trafficking protein, found in Xanthomonas euvesicatoria pv. vesicatoria (strain 85-10) (Xanthomonas campestris pv. vesicatoria).